Here is a 253-residue protein sequence, read N- to C-terminus: Regulatory protein VirG (253 aa).

In terms of domain architecture, Response regulatory spans 15–129 (HVLVIDDDVA…EFLARIRVAL (115 aa)). Position 64 is a 4-aspartylphosphate (Asp-64). The segment at residues 141-241 (RRSFSFADWT…ARGAGYFFDA (101 aa)) is a DNA-binding region (ompR/PhoB-type).

In terms of processing, phosphorylated by wide host range (WHR) VirA protein.

The protein resides in the cytoplasm. In terms of biological role, virG is required for the positive regulation of at least two vir loci encoded by the Ti plasmid of A.tumefaciens. In Agrobacterium fabrum (strain C58 / ATCC 33970) (Agrobacterium tumefaciens (strain C58)), this protein is Regulatory protein VirG (virG).